The primary structure comprises 601 residues: Glutathione-regulated potassium-efflux system protein KefB (601 aa).

Helical transmembrane passes span aspartate 5–alanine 25, isoleucine 29–phenylalanine 49, glutamate 55–leucine 75, isoleucine 87–methionine 107, alanine 115–methionine 135, valine 152–glycine 172, leucine 181–leucine 201, phenylalanine 207–glycine 227, leucine 230–leucine 250, glycine 268–tyrosine 288, isoleucine 291–glycine 311, leucine 324–alanine 344, and alanine 356–isoleucine 376. One can recognise an RCK N-terminal domain in the interval lysine 400 to threonine 519.

It belongs to the monovalent cation:proton antiporter 2 (CPA2) transporter (TC 2.A.37) family. KefB subfamily. In terms of assembly, interacts with the regulatory subunit KefG.

It is found in the cell inner membrane. Its function is as follows. Pore-forming subunit of a potassium efflux system that confers protection against electrophiles. Catalyzes K(+)/H(+) antiport. The chain is Glutathione-regulated potassium-efflux system protein KefB from Cronobacter sakazakii (strain ATCC BAA-894) (Enterobacter sakazakii).